We begin with the raw amino-acid sequence, 118 residues long: UPF0145 protein PTO0347 (118 aa).

The protein belongs to the UPF0145 family.

The chain is UPF0145 protein PTO0347 from Picrophilus torridus (strain ATCC 700027 / DSM 9790 / JCM 10055 / NBRC 100828 / KAW 2/3).